The sequence spans 275 residues: Tumor necrosis factor receptor superfamily member 14 (275 aa).

The first 38 residues, 1-38, serve as a signal peptide directing secretion; sequence MEPLPGWGSAPWSQAPTDNTFRLVPCVFLLNLLQRISA. TNFR-Cys repeat units follow at residues 41–75, 77–119, and 120–162; these read SCRQEEFLVGDECCPMCNPGYHVKQVCSEHTGTVC, PCPP…DTVC, and RCIP…DTVC. Disulfide bonds link Cys42–Cys53, Cys54–Cys67, Cys57–Cys75, Cys78–Cys93, Cys96–Cys111, Cys99–Cys119, Cys121–Cys138, and Cys144–Cys162. Asn184 and Asn197 each carry an N-linked (GlcNAc...) asparagine glycan. A helical transmembrane segment spans residues 211–231; that stretch reads VVSILLPLVIVGAGIAGFLIC.

This sequence belongs to the tumor necrosis factor receptor superfamily. Interacts with TRAF2, TRAF3 and TRAF5. Interacts (via CRD1/TNFR-Cys 1) with CD160; this interaction is direct. Interacts (via CRD1/TNFR-Cys 1) with BTLA; this interaction is direct. In terms of processing, N-glycosylated. As to expression, expressed at mucosal sites including colon and pulmonary epithelial cells. Expressed in naive T cells.

The protein resides in the cell membrane. In terms of biological role, receptor for four distinct ligands: The TNF superfamily members TNFSF14/LIGHT and homotrimeric LTA/lymphotoxin-alpha and the immunoglobulin superfamily members BTLA and CD160, altogether defining a complex stimulatory and inhibitory signaling network. Signals via the TRAF2-TRAF3 E3 ligase pathway to promote immune cell survival and differentiation. Participates in bidirectional cell-cell contact signaling between antigen presenting cells and lymphocytes. In response to ligation of TNFSF14/LIGHT, delivers costimulatory signals to T cells, promoting cell proliferation and effector functions. Interacts with CD160 on NK cells, enhancing IFNG production and anti-tumor immune response. In the context of bacterial infection, acts as a signaling receptor on epithelial cells for CD160 from intraepithelial lymphocytes, triggering the production of antimicrobial proteins and pro-inflammatory cytokines. Upon binding to CD160 on activated CD4+ T cells, down-regulates CD28 costimulatory signaling, restricting memory and alloantigen-specific immune response. May interact in cis (on the same cell) or in trans (on other cells) with BTLA. In cis interactions, appears to play an immune regulatory role inhibiting in trans interactions in naive T cells to maintain a resting state. In trans interactions, can predominate during adaptive immune response to provide survival signals to effector T cells. This Mus musculus (Mouse) protein is Tumor necrosis factor receptor superfamily member 14.